A 207-amino-acid polypeptide reads, in one-letter code: MKFDLTTAYTLSIPLLASSGTVLATTADTSSKSSTMTAIHTSTGYNNHSDSLWATFNNNVALTWDAPNNEFYLPVITWHNRYTYDKEKTDKYNERPWGFGYGKYRYDKDNDWHSLYAMAFMDSHNRLEPIIGYGFQKMWIPGDLDGFRLGVGFTLSVTARHDYYYVPIPLPLPLFSVEYDQLSFQGTYIPGTYNNGNVFFAWLRWQW.

The first 24 residues, 1 to 24 (MKFDLTTAYTLSIPLLASSGTVLA), serve as a signal peptide directing secretion. Catalysis depends on residues H79, D122, and S123.

It belongs to the lipid A palmitoyltransferase family. As to quaternary structure, homodimer.

Its subcellular location is the cell outer membrane. The catalysed reaction is a lipid A + a 1,2-diacyl-sn-glycero-3-phosphocholine = a hepta-acyl lipid A + a 2-acyl-sn-glycero-3-phosphocholine. It carries out the reaction a lipid IVA + a 1,2-diacyl-sn-glycero-3-phosphocholine = a lipid IVB + a 2-acyl-sn-glycero-3-phosphocholine. The enzyme catalyses a lipid IIA + a 1,2-diacyl-sn-glycero-3-phosphocholine = a lipid IIB + a 2-acyl-sn-glycero-3-phosphocholine. Functionally, transfers a fatty acid residue from the sn-1 position of a phospholipid to the N-linked hydroxyfatty acid chain on the proximal unit of lipid A or its precursors. The polypeptide is Lipid A acyltransferase PagP (Photorhabdus asymbiotica subsp. asymbiotica (strain ATCC 43949 / 3105-77) (Xenorhabdus luminescens (strain 2))).